An 868-amino-acid chain; its full sequence is Protein translocase subunit SecA (868 aa).

Residues Gln87, 105–109 (GEGKT), and Asp500 contribute to the ATP site. Zn(2+) is bound by residues Cys849, Cys851, Cys860, and His861.

It belongs to the SecA family. Monomer and homodimer. Part of the essential Sec protein translocation apparatus which comprises SecA, SecYEG and auxiliary proteins SecDF-YajC and YidC. It depends on Zn(2+) as a cofactor.

It is found in the cell membrane. It localises to the cytoplasm. The catalysed reaction is ATP + H2O + cellular proteinSide 1 = ADP + phosphate + cellular proteinSide 2.. In terms of biological role, part of the Sec protein translocase complex. Interacts with the SecYEG preprotein conducting channel. Has a central role in coupling the hydrolysis of ATP to the transfer of proteins into and across the cell membrane, serving both as a receptor for the preprotein-SecB complex and as an ATP-driven molecular motor driving the stepwise translocation of polypeptide chains across the membrane. The protein is Protein translocase subunit SecA of Wolbachia pipientis wMel.